Reading from the N-terminus, the 493-residue chain is Probable cytochrome P450 CYP36A1 (493 aa).

3 helical membrane passes run 1–21 (MLFAQLVILVIIVMLFLCRFA), 60–80 (GGIFTLWLPFPTIVICDYDML), and 290–310 (QLIVAIYDLYSAGMETIIIVL). Residue cysteine 440 participates in heme binding.

It belongs to the cytochrome P450 family. Requires heme as cofactor.

It localises to the membrane. Cytochromes P450 are a group of heme-thiolate monooxygenases. They oxidize a variety of structurally unrelated compounds, including steroids, fatty acids, and xenobiotics. The chain is Probable cytochrome P450 CYP36A1 (cyp-36A1) from Caenorhabditis elegans.